The chain runs to 484 residues: Putative cysteine ligase BshC (484 aa).

Positions 372–435 (RAFRDRVEGL…AARDEVLARH (64 aa)) form a coiled coil.

The protein belongs to the BshC family.

The protein is Putative cysteine ligase BshC of Thermus thermophilus (strain ATCC 27634 / DSM 579 / HB8).